Here is a 462-residue protein sequence, read N- to C-terminus: Zinc finger CCCH domain-containing protein 8 (462 aa).

C3H1-type zinc fingers lie at residues 105 to 133 (RPGE…HPQW), 156 to 184 (QEGE…HPKE), 209 to 237 (RPSE…HPKD), 288 to 316 (RPGE…HPDR), 367 to 395 (RPGA…HPID), and 422 to 450 (REDA…HPPP).

This chain is Zinc finger CCCH domain-containing protein 8, found in Oryza sativa subsp. japonica (Rice).